A 650-amino-acid chain; its full sequence is Phosphomethylpyrimidine synthase (650 aa).

Substrate is bound by residues asparagine 241, methionine 270, tyrosine 299, histidine 335, 355-357, 396-399, and glutamate 435; these read SRG and DGLR. Histidine 439 contributes to the Zn(2+) binding site. Tyrosine 462 contacts substrate. Residue histidine 503 coordinates Zn(2+). Residues cysteine 583, cysteine 586, and cysteine 591 each contribute to the [4Fe-4S] cluster site.

It belongs to the ThiC family. In terms of assembly, homodimer. [4Fe-4S] cluster serves as cofactor.

It carries out the reaction 5-amino-1-(5-phospho-beta-D-ribosyl)imidazole + S-adenosyl-L-methionine = 4-amino-2-methyl-5-(phosphooxymethyl)pyrimidine + CO + 5'-deoxyadenosine + formate + L-methionine + 3 H(+). It functions in the pathway cofactor biosynthesis; thiamine diphosphate biosynthesis. Its function is as follows. Catalyzes the synthesis of the hydroxymethylpyrimidine phosphate (HMP-P) moiety of thiamine from aminoimidazole ribotide (AIR) in a radical S-adenosyl-L-methionine (SAM)-dependent reaction. This chain is Phosphomethylpyrimidine synthase, found in Pseudoalteromonas translucida (strain TAC 125).